The following is a 129-amino-acid chain: Small ribosomal subunit protein uS11 (129 aa).

Belongs to the universal ribosomal protein uS11 family. In terms of assembly, part of the 30S ribosomal subunit. Interacts with proteins S7 and S18. Binds to IF-3.

Its function is as follows. Located on the platform of the 30S subunit, it bridges several disparate RNA helices of the 16S rRNA. Forms part of the Shine-Dalgarno cleft in the 70S ribosome. The protein is Small ribosomal subunit protein uS11 of Rhizobium etli (strain CIAT 652).